The following is a 272-amino-acid chain: Shikimate dehydrogenase (NADP(+)) (272 aa).

Residues 19 to 21 (SLS) and T66 each bind shikimate. K70 functions as the Proton acceptor in the catalytic mechanism. Residue E82 coordinates NADP(+). Residues N91 and D106 each coordinate shikimate. NADP(+) contacts are provided by residues 129-133 (GAGGA), 151-156 (NRTPEK), and I214. Residue Y216 coordinates shikimate. Residue G237 coordinates NADP(+).

This sequence belongs to the shikimate dehydrogenase family. In terms of assembly, homodimer.

It carries out the reaction shikimate + NADP(+) = 3-dehydroshikimate + NADPH + H(+). It functions in the pathway metabolic intermediate biosynthesis; chorismate biosynthesis; chorismate from D-erythrose 4-phosphate and phosphoenolpyruvate: step 4/7. Involved in the biosynthesis of the chorismate, which leads to the biosynthesis of aromatic amino acids. Catalyzes the reversible NADPH linked reduction of 3-dehydroshikimate (DHSA) to yield shikimate (SA). The polypeptide is Shikimate dehydrogenase (NADP(+)) (Thermococcus kodakarensis (strain ATCC BAA-918 / JCM 12380 / KOD1) (Pyrococcus kodakaraensis (strain KOD1))).